The chain runs to 267 residues: Large ribosomal subunit protein uL4 (267 aa).

The protein belongs to the universal ribosomal protein uL4 family. As to quaternary structure, part of the 50S ribosomal subunit.

One of the primary rRNA binding proteins, this protein initially binds near the 5'-end of the 23S rRNA. It is important during the early stages of 50S assembly. It makes multiple contacts with different domains of the 23S rRNA in the assembled 50S subunit and ribosome. Its function is as follows. Forms part of the polypeptide exit tunnel. The chain is Large ribosomal subunit protein uL4 from Saccharolobus islandicus (strain M.16.27) (Sulfolobus islandicus).